Consider the following 240-residue polypeptide: Glutathione S-transferase theta-1 (240 aa).

In terms of domain architecture, GST N-terminal spans 2–82 (GLELYLDLLS…YLARKYKVPD (81 aa)). Residues H40, 53–54 (KV), and 66–67 (ES) contribute to the glutathione site. One can recognise a GST C-terminal domain in the interval 88–226 (DLQACARVDE…AKDSQPADPT (139 aa)).

This sequence belongs to the GST superfamily. Theta family. Homodimer.

It is found in the cytoplasm. It catalyses the reaction RX + glutathione = an S-substituted glutathione + a halide anion + H(+). Functionally, conjugation of reduced glutathione to a wide number of exogenous and endogenous hydrophobic electrophiles. Also binds steroids, bilirubin, carcinogens and numerous organic anions. Has dichloromethane dehalogenase activity. The sequence is that of Glutathione S-transferase theta-1 (GSTT1) from Bos taurus (Bovine).